The chain runs to 231 residues: Lipoprotein-releasing system ATP-binding protein LolD (231 aa).

In terms of domain architecture, ABC transporter spans 6–230; that stretch reads LSCKNVSKKY…DGELELVINS (225 aa). 42-49 is a binding site for ATP; sequence GLSGSGKT.

The protein belongs to the ABC transporter superfamily. Lipoprotein translocase (TC 3.A.1.125) family. As to quaternary structure, the complex is composed of two ATP-binding proteins (LolD) and two transmembrane proteins (LolC and LolE).

The protein localises to the cell inner membrane. Part of the ABC transporter complex LolCDE involved in the translocation of mature outer membrane-directed lipoproteins, from the inner membrane to the periplasmic chaperone, LolA. Responsible for the formation of the LolA-lipoprotein complex in an ATP-dependent manner. This Francisella tularensis subsp. tularensis (strain FSC 198) protein is Lipoprotein-releasing system ATP-binding protein LolD.